Consider the following 966-residue polypeptide: Mitogen-activated protein kinase kinase kinase 13 (966 aa).

The interval 1–59 (MANPQEHLSCSSSPRLPLSENKTFNGLQDDLAPMGSHASPKLLKDQQEKGMVQTELAEG) is disordered. The segment covering 8-19 (LSCSSSPRLPLS) has biased composition (low complexity). Residues 168–409 (ISELQWLGSG…FRQTLMHLDI (242 aa)) enclose the Protein kinase domain. ATP is bound by residues 174–182 (LGSGAQGAV) and Lys195. The active-site Proton acceptor is the Asp279. Leucine-zipper stretches follow at residues 433–454 (VKKH…DEEL) and 486–507 (LSAI…EQAV). Residues 457–496 (RRREELRHALDIREHYERKLERANNLYMELSAIMLQLEMR) are a coiled coil. Disordered stretches follow at residues 561 to 663 (EVAP…GQDI), 743 to 874 (LDVP…DELA), and 937 to 966 (QFEE…SATW). A compositionally biased stretch (low complexity) spans 567 to 581 (SPLSGSPKLSSSSSK). A compositionally biased stretch (basic residues) spans 582-594 (SRYRSKPRHRRGN). The span at 609–622 (QPAQEDSPHPTSLH) shows a compositional bias: polar residues. The span at 629 to 642 (PSSQHHNLLQQQYQ) shows a compositional bias: low complexity. Acidic residues predominate over residues 814 to 827 (DSSEEEEGEVDSEV). The acidic stretch occupies residues 815–828 (SSEEEEGEVDSEVE). The span at 840–855 (SSCQSYSTFSSENFSV) shows a compositional bias: polar residues. Residues 939–950 (EESDCDSSDGEC) are compositionally biased toward acidic residues. The span at 954-966 (TVRTNKHYSSATW) shows a compositional bias: polar residues.

Belongs to the protein kinase superfamily. Ser/Thr protein kinase family. As to quaternary structure, homodimer; forms dimers through the leucine-zipper motif. Interacts with the C-terminus of MAPK8IP1 through the kinase catalytic domain. Binds PRDX3. Associates with the IKK complex through the kinase domain. It depends on Mg(2+) as a cofactor. Post-translationally, autophosphorylated on serine and threonine residues.

The protein localises to the cytoplasm. Its subcellular location is the membrane. The enzyme catalyses L-seryl-[protein] + ATP = O-phospho-L-seryl-[protein] + ADP + H(+). It carries out the reaction L-threonyl-[protein] + ATP = O-phospho-L-threonyl-[protein] + ADP + H(+). Its activity is regulated as follows. Activated by autophosphorylation and homodimerization. Its function is as follows. Activates the JUN N-terminal pathway through activation of the MAP kinase kinase MAP2K7. Acts synergistically with PRDX3 to regulate the activation of NF-kappa-B in the cytosol. This activation is kinase-dependent and involves activating the IKK complex, the IKBKB-containing complex that phosphorylates inhibitors of NF-kappa-B. The polypeptide is Mitogen-activated protein kinase kinase kinase 13 (MAP3K13) (Bos taurus (Bovine)).